The following is a 373-amino-acid chain: Tomoregulin-1 (373 aa).

The N-terminal stretch at 1–36 (MGAQAPLRLPAAPPLAVCGYTSVLLLFAFCLPGSGA) is a signal peptide. Residues 37 to 323 (SNQPAGGGGD…VPSRQKLTHV (287 aa)) lie on the Extracellular side of the membrane. Asn56 carries an N-linked (GlcNAc...) asparagine glycan. The Kazal-like 1 domain occupies 91-138 (ACQFQCHTNYIPVCGSNGDTYQNECFLRRAACKHQKDITVVARGPCYS). 3 disulfide bridges follow: Cys92-Cys122, Cys96-Cys115, and Cys104-Cys136. N-linked (GlcNAc...) asparagine glycosylation occurs at Asn140. The disordered stretch occupies residues 140-162 (NGSGSGEGEEEGSGAGAHRKHSK). Positions 182–230 (VCNIDCSGYSFNPVCASDGSSYNNPCFVREASCIRQEQIDIRHLGHCTD) constitute a Kazal-like 2 domain. 6 cysteine pairs are disulfide-bonded: Cys183–Cys214, Cys187–Cys207, Cys196–Cys228, Cys268–Cys281, Cys276–Cys292, and Cys294–Cys303. In terms of domain architecture, EGF-like spans 264 to 304 (SHMPCPENLNGYCIHGKCEFIYSTQKASCRCESGYTGQHCE). The chain crosses the membrane as a helical span at residues 324–344 (LIAAIIGAVQIAIIVAIVMCI). Residues 345–373 (TRKCPKNNRGRRQKQNLGHFTSETSSRMV) lie on the Cytoplasmic side of the membrane. Positions 352 to 373 (NRGRRQKQNLGHFTSETSSRMV) are disordered. Residues 359-373 (QNLGHFTSETSSRMV) are compositionally biased toward polar residues.

Belongs to the tomoregulin family. As to quaternary structure, may interact with ST14.

Its subcellular location is the cell membrane. Its function is as follows. Neuron-specific restriction factor that prevents herpes simplex virus 1 (HHV-1) infection in the brain by blocking viral entry. Also able to restrict herpes simplex virus 2 (HHV-2) infection, although to a lesser extent. Acts by preventing the association between the viral glycoprotein D (gD) and its cell surface receptor NECTIN1, thereby inhibiting fusion of the virus and the cell membrane. Also able to prevent the association between the viral glycoprotein B (gB) and MYH9/NMMHC-IIA and MYH10/NMMHC-IIB receptors. The sequence is that of Tomoregulin-1 (Tmeff1) from Rattus norvegicus (Rat).